The sequence spans 96 residues: Large ribosomal subunit protein eL43 (96 aa).

Residues 41 to 62 form a C4-type zinc finger; sequence CPVCGFMKLKRISTSIWECKKC.

This sequence belongs to the eukaryotic ribosomal protein eL43 family. Requires Zn(2+) as cofactor.

This is Large ribosomal subunit protein eL43 from Methanococcus aeolicus (strain ATCC BAA-1280 / DSM 17508 / OCM 812 / Nankai-3).